Reading from the N-terminus, the 665-residue chain is MTFRYRGPSPKGDQPKAIAGLVEALRDGERFVTLLGATGTGKTVTMAKVIEALGRPALVLAPNKILAAQLAAEFRELFPENAVEYFISYYDYYQPEAYVPGKDLYIEKDASINPEIERLRHSTTRSLLTRRDVIVVASVSAIYGLGDPREYRARNLVVERGKPYPREVLLERLLELGYQRNDIDLSPGRFRAKGEVLEIFPAYETEPIRVELFGDEVERISQVHPVTGERLRELPGFVLFPATHYLSPEGLEEILKEIEKELWERVRYFEERGEVLYAQRLKERTLYDLEMLRVMGTCPGVENYARYFTGKAPGEPPYTLLDYFPEDFLVFLDESHVTVPQLQGMYRGDYARKKTLVDYGFRLPSALDNRPLRFEEFLERVSQVVFVSATPGPFELAHSGRVVEQIIRPTGLLDPLVRVKPTENQILDLMEGIRERAARGERTLVTVLTVRMAEELTSFLVEHGIRARYLHHELDAFERQALIRDLRLGHYDCLVGINLLREGLDIPEVSLVAILDADKEGFLRSERSLIQTIGRAARNARGEVWLYADRVSEAMQRAIEETNRRRALQEAYNLEHGITPETVRKEVRAVIRPEGYEEAPLEADLSGEDLRERIAELELAMWQAAEALDFERAARLRDEIRALEARLQGVRAPEPVPGGRKRKRR.

The Helicase ATP-binding domain maps to 23-408 (EALRDGERFV…SGRVVEQIIR (386 aa)). Position 36-43 (36-43 (GATGTGKT)) interacts with ATP. The Beta-hairpin motif lies at 89-112 (YYDYYQPEAYVPGKDLYIEKDASI). The 167-residue stretch at 425-591 (QILDLMEGIR…TVRKEVRAVI (167 aa)) folds into the Helicase C-terminal domain. The UVR domain occupies 611 to 646 (RERIAELELAMWQAAEALDFERAARLRDEIRALEAR).

This sequence belongs to the UvrB family. In terms of assembly, forms a heterotetramer with UvrA during the search for lesions. Interacts with UvrC in an incision complex.

The protein resides in the cytoplasm. Functionally, the UvrABC repair system catalyzes the recognition and processing of DNA lesions. A damage recognition complex composed of 2 UvrA and 2 UvrB subunits scans DNA for abnormalities. Upon binding of the UvrA(2)B(2) complex to a putative damaged site, the DNA wraps around one UvrB monomer. DNA wrap is dependent on ATP binding by UvrB and probably causes local melting of the DNA helix, facilitating insertion of UvrB beta-hairpin between the DNA strands. Then UvrB probes one DNA strand for the presence of a lesion. If a lesion is found the UvrA subunits dissociate and the UvrB-DNA preincision complex is formed. This complex is subsequently bound by UvrC and the second UvrB is released. If no lesion is found, the DNA wraps around the other UvrB subunit that will check the other stand for damage. In Thermus thermophilus (strain ATCC 27634 / DSM 579 / HB8), this protein is UvrABC system protein B (uvrB).